Consider the following 315-residue polypeptide: MTSRTPTTVPCLLGPTASGKTAAALALAARHPVEIISVDSALVYREMDIGTAKPTAEERAVAPHHLIDIVDPTDSYSAAQFRADTLRLTGEIHARGRLPLLVGGTMLYYKALTQGLNDLPAADADLRATLDADAAREGWPAMHARLAAVDPVTAARLAPNDSQRIQRALEVFMLTGQAMSALLAAPARVDDAAAAWRFVPVALEPSDRGVLHARIEKRFDAMLANGFVDEVVKLRERGDLSPEMPSMRCVGYRQVWEYLDGAVDYSTMRDKGVFATRQLCKRQLTWLRSMTERVVVDCCDPHATARVLEAIEALL.

Residue 14-21 (GPTASGKT) participates in ATP binding. 16 to 21 (TASGKT) lines the substrate pocket. Interaction with substrate tRNA stretches follow at residues 39–42 (DSAL), 163–167 (QRIQR), and 248–253 (RCVGYR).

This sequence belongs to the IPP transferase family. Monomer. Mg(2+) serves as cofactor.

The catalysed reaction is adenosine(37) in tRNA + dimethylallyl diphosphate = N(6)-dimethylallyladenosine(37) in tRNA + diphosphate. In terms of biological role, catalyzes the transfer of a dimethylallyl group onto the adenine at position 37 in tRNAs that read codons beginning with uridine, leading to the formation of N6-(dimethylallyl)adenosine (i(6)A). The polypeptide is tRNA dimethylallyltransferase (Paraburkholderia xenovorans (strain LB400)).